Here is a 464-residue protein sequence, read N- to C-terminus: ATP synthase subunit beta (464 aa).

153–160 (GGAGVGKT) serves as a coordination point for ATP.

This sequence belongs to the ATPase alpha/beta chains family. As to quaternary structure, F-type ATPases have 2 components, CF(1) - the catalytic core - and CF(0) - the membrane proton channel. CF(1) has five subunits: alpha(3), beta(3), gamma(1), delta(1), epsilon(1). CF(0) has three main subunits: a(1), b(2) and c(9-12). The alpha and beta chains form an alternating ring which encloses part of the gamma chain. CF(1) is attached to CF(0) by a central stalk formed by the gamma and epsilon chains, while a peripheral stalk is formed by the delta and b chains.

It localises to the cell inner membrane. It carries out the reaction ATP + H2O + 4 H(+)(in) = ADP + phosphate + 5 H(+)(out). Its function is as follows. Produces ATP from ADP in the presence of a proton gradient across the membrane. The catalytic sites are hosted primarily by the beta subunits. This Burkholderia ambifaria (strain MC40-6) protein is ATP synthase subunit beta.